The primary structure comprises 572 residues: Methionine--tRNA ligase (572 aa).

The short motif at 11 to 21 (PYINGIKHLGN) is the 'HIGH' region element. The Zn(2+) site is built by C143, C146, C156, and C159. The 'KMSKS' region signature appears at 346–350 (QFSTS). T349 contacts ATP.

This sequence belongs to the class-I aminoacyl-tRNA synthetase family. MetG type 1 subfamily. Monomer. Requires Zn(2+) as cofactor.

It localises to the cytoplasm. It catalyses the reaction tRNA(Met) + L-methionine + ATP = L-methionyl-tRNA(Met) + AMP + diphosphate. Functionally, is required not only for elongation of protein synthesis but also for the initiation of all mRNA translation through initiator tRNA(fMet) aminoacylation. In Dinoroseobacter shibae (strain DSM 16493 / NCIMB 14021 / DFL 12), this protein is Methionine--tRNA ligase.